Consider the following 421-residue polypeptide: DUF724 domain-containing protein 8 (421 aa).

2 stretches are compositionally biased toward polar residues: residues 149 to 165 and 199 to 213; these read TQGS…NANE and PRNQ…TLEN. The tract at residues 149-229 is disordered; that stretch reads TQGSGDKTGD…NRKRKREENL (81 aa). The DUF724 domain occupies 246 to 420; the sequence is VLPFEKKLRI…LEFLATASAP (175 aa). Positions 361–397 form a coiled coil; sequence EKVTAEKESVKAENKRKILELQRLNEEMDKEIAQSKS.

In terms of tissue distribution, expressed in leaves and flowers, and at lower levels in roots, stems and siliques.

It localises to the nucleus. May be involved in the polar growth of plant cells via transportation of RNAs. In Arabidopsis thaliana (Mouse-ear cress), this protein is DUF724 domain-containing protein 8.